Consider the following 88-residue polypeptide: Small ribosomal subunit protein uS15 (88 aa).

The protein belongs to the universal ribosomal protein uS15 family. In terms of assembly, part of the 30S ribosomal subunit. Forms a bridge to the 50S subunit in the 70S ribosome, contacting the 23S rRNA.

In terms of biological role, one of the primary rRNA binding proteins, it binds directly to 16S rRNA where it helps nucleate assembly of the platform of the 30S subunit by binding and bridging several RNA helices of the 16S rRNA. Forms an intersubunit bridge (bridge B4) with the 23S rRNA of the 50S subunit in the ribosome. The protein is Small ribosomal subunit protein uS15 of Geotalea uraniireducens (strain Rf4) (Geobacter uraniireducens).